The chain runs to 230 residues: MTRKTIIVGVSGASCSGKSTLCQLLHAIFEGSSLVHEDDFYKTDAEIPVKNGIADWDCQESLNLDAFLENLHYIRDHGVLPTHLRNRENKNVAPEALIEYADIIKEFKAPAIPTLEQHLVFVDGFMMYVNEDLINAFDIRLMLVTDFDTLKRRREARTGYITLEGFWQDPPHYFENYVWPGYVHGHSHLFVNGDVTGKLLDKRIQLSPSSKMSVRDNVQWAINSILNALQ.

12–20 (GASCSGKST) contributes to the ATP binding site. Residues serine 19 and aspartate 38 each coordinate Mg(2+). Aspartate 38 serves as the catalytic Proton acceptor. Substrate contacts are provided by residues 38 to 41 (DDFY) and 56 to 57 (WD). Arginine 153 provides a ligand contact to ATP. Residues arginine 154 and 159–160 (GY) contribute to the substrate site. ATP is bound by residues 157 to 159 (RTG) and 203 to 205 (RIQ).

The protein belongs to the uridine kinase family. NRK subfamily.

The enzyme catalyses beta-nicotinamide D-riboside + ATP = beta-nicotinamide D-ribonucleotide + ADP + H(+). The catalysed reaction is beta-D-ribosylnicotinate + ATP = nicotinate beta-D-ribonucleotide + ADP + H(+). Its pathway is cofactor biosynthesis; NAD(+) biosynthesis. In terms of biological role, catalyzes the phosphorylation of nicotinamide riboside (NR) and nicotinic acid riboside (NaR) to form nicotinamide mononucleotide (NMN) and nicotinic acid mononucleotide (NaMN). The chain is Nicotinamide riboside kinase (nrk1) from Schizosaccharomyces pombe (strain 972 / ATCC 24843) (Fission yeast).